The sequence spans 297 residues: Probable endonuclease 4 (297 aa).

Positions 69, 110, 145, 179, 182, 214, 227, 229, and 259 each coordinate Zn(2+).

The protein belongs to the AP endonuclease 2 family. Zn(2+) serves as cofactor.

It catalyses the reaction Endonucleolytic cleavage to 5'-phosphooligonucleotide end-products.. Its function is as follows. Endonuclease IV plays a role in DNA repair. It cleaves phosphodiester bonds at apurinic or apyrimidinic (AP) sites, generating a 3'-hydroxyl group and a 5'-terminal sugar phosphate. The protein is Probable endonuclease 4 of Listeria innocua serovar 6a (strain ATCC BAA-680 / CLIP 11262).